The following is an 882-amino-acid chain: Alanine--tRNA ligase (882 aa).

The Zn(2+) site is built by His570, His574, Cys672, and His676.

This sequence belongs to the class-II aminoacyl-tRNA synthetase family. Zn(2+) serves as cofactor.

It is found in the cytoplasm. The catalysed reaction is tRNA(Ala) + L-alanine + ATP = L-alanyl-tRNA(Ala) + AMP + diphosphate. Its function is as follows. Catalyzes the attachment of alanine to tRNA(Ala) in a two-step reaction: alanine is first activated by ATP to form Ala-AMP and then transferred to the acceptor end of tRNA(Ala). Also edits incorrectly charged Ser-tRNA(Ala) and Gly-tRNA(Ala) via its editing domain. This chain is Alanine--tRNA ligase, found in Xanthomonas axonopodis pv. citri (strain 306).